The sequence spans 78 residues: Large ribosomal subunit protein eL20 (78 aa).

It belongs to the eukaryotic ribosomal protein eL20 family. Part of the 50S ribosomal subunit. Binds 23S rRNA.

The polypeptide is Large ribosomal subunit protein eL20 (Nanoarchaeum equitans (strain Kin4-M)).